We begin with the raw amino-acid sequence, 1129 residues long: Large proline-rich protein bag6 (1129 aa).

Residues 1-76 enclose the Ubiquitin-like domain; sequence MEVTVKTLDS…HLVERAPPQT (76 aa). Disordered regions lie at residues 69–108, 187–235, 347–402, 490–518, 550–606, 654–692, 942–967, and 987–1009; these read VERA…PERN, QPVN…SPSE, TGNG…HPHP, PAAP…VPGA, GSNT…QHLS, VPVS…ESLP, VPQA…NGAA, and VPTI…QWAA. Low complexity predominate over residues 73–105; the sequence is PPQTQPSTGGPSTSSSTSPSSSNAANVPGAGAP. Polar residues-rich tracts occupy residues 209–232 and 364–383; these read RETL…SHPS and HTPT…QPPS. Composition is skewed to low complexity over residues 553 to 593 and 655 to 666; these read TPSS…SSGP and PVSTSPPQSASQ. Pro residues predominate over residues 667–686; it reads APPPSSPSPPPAHSSPPPAA. Residues 947 to 956 show a composition bias toward polar residues; that stretch reads EASSQDQPME.

Component of the bag6/bat3 complex.

It is found in the cytoplasm. The protein resides in the cytosol. The protein localises to the nucleus. It localises to the secreted. Its subcellular location is the extracellular exosome. Its function is as follows. ATP-independent molecular chaperone preventing the aggregation of misfolded and hydrophobic patches-containing proteins. Functions as part of a cytosolic protein quality control complex, the bag6/bat3 complex, which maintains these client proteins in a soluble state and participates in their proper delivery to the endoplasmic reticulum or alternatively can promote their sorting to the proteasome where they undergo degradation. The bag6/bat3 complex is involved in the post-translational delivery of tail-anchored/type II transmembrane proteins to the endoplasmic reticulum membrane. Similarly, the bag6/bat3 complex also functions as a sorting platform for proteins of the secretory pathway that are mislocalized to the cytosol either delivering them to the proteasome for degradation or to the endoplasmic reticulum. The bag6/bat3 complex also plays a role in the endoplasmic reticulum-associated degradation (ERAD), a quality control mechanism that eliminates unwanted proteins of the endoplasmic reticulum through their retrotranslocation to the cytosol and their targeting to the proteasome. It maintains these retrotranslocated proteins in an unfolded yet soluble state condition in the cytosol to ensure their proper delivery to the proteasome. Also required for selective ubiquitin-mediated degradation of defective nascent chain polypeptides by the proteasome. Also involved in endoplasmic reticulum stress-induced pre-emptive quality control, a mechanism that selectively attenuates the translocation of newly synthesized proteins into the endoplasmic reticulum and reroutes them to the cytosol for proteasomal degradation. May ensure the proper degradation of these proteins and thereby protects the endoplasmic reticulum from protein overload upon stress. By stabilizing a large spectrum of proteins, may indirectly affect different biological processes including apoptosis. By controlling the steady-state expression of the IGF1R receptor, indirectly regulates the insulin-like growth factor receptor signaling pathway. In terms of biological role, when nuclear, may also act as a component of some chromatin regulator complex. This is Large proline-rich protein bag6 from Xenopus tropicalis (Western clawed frog).